Reading from the N-terminus, the 398-residue chain is Elongation factor Tu (398 aa).

One can recognise a tr-type G domain in the interval 10–207 (KPHVNIGTIG…TADEYIPEPE (198 aa)). Positions 19-26 (GHVDHGKT) are G1. GTP is bound at residue 19–26 (GHVDHGKT). T26 contacts Mg(2+). A G2 region spans residues 63 to 67 (GITIN). The interval 84–87 (DAPG) is G3. Residues 84–88 (DAPGH) and 139–142 (NKID) contribute to the GTP site. The segment at 139-142 (NKID) is G4. Residues 177–179 (SAL) are G5.

This sequence belongs to the TRAFAC class translation factor GTPase superfamily. Classic translation factor GTPase family. EF-Tu/EF-1A subfamily. In terms of assembly, monomer.

The protein resides in the cytoplasm. The enzyme catalyses GTP + H2O = GDP + phosphate + H(+). Its function is as follows. GTP hydrolase that promotes the GTP-dependent binding of aminoacyl-tRNA to the A-site of ribosomes during protein biosynthesis. The sequence is that of Elongation factor Tu from Streptococcus uberis (strain ATCC BAA-854 / 0140J).